Consider the following 240-residue polypeptide: Endonuclease NBR9 (240 aa).

The tract at residues 1 to 24 (MKGTGGVVVGTQNPVRDYNHSTDE) is disordered. Positions 97–173 (IDLHGLYVKE…NSGVLVLELQ (77 aa)) constitute a Smr domain. The disordered stretch occupies residues 181 to 219 (GPAVNAPTNQYNAQPHPQYNNNGGQPQGQAQNYNNSGND). The span at 194-215 (QPHPQYNNNGGQPQGQAQNYNN) shows a compositional bias: low complexity.

It is found in the cytoplasm. Its function is as follows. Endonuclease involved in nonstop mRNA decay via the formation of mRNA cleavage fragments in the vicinity of stalled ribosomes. This Saccharomyces cerevisiae (strain ATCC 204508 / S288c) (Baker's yeast) protein is Endonuclease NBR9.